A 161-amino-acid polypeptide reads, in one-letter code: Anaerobic nitrite reductase Glb1-2 (161 aa).

The Globin domain occupies 9 to 158 (AFTEEQEALV…LASAIIAEMK (150 aa)). The Homodimerization motif lies at 42–46 (EIAPP). The heme b site is built by Ser-52, Lys-66, His-70, Lys-100, Thr-104, and His-105. The short motif at 112-124 (PEHFEVTKQALLD) is the Homodimerization element.

It belongs to the plant globin family. In terms of assembly, homodimer. It depends on heme b as a cofactor. In terms of tissue distribution, mainly expressed in root nodules and leaves, and, to a lower extent, in roots, stems, flowers and fruits. Accumulates in mature root nodules.

The enzyme catalyses Fe(III)-heme b-[protein] + nitric oxide + H2O = Fe(II)-heme b-[protein] + nitrite + 2 H(+). Phytoglobin that reduces nitrite to nitric oxide (NO) under anoxic conditions (e.g. during flooding or in waterlogged soil) and upon root nodulation. Required for general plant development and during nodulation, especially for the onset of symbiosis. Monitors nitric oxide (NO) levels during early phase of the nitrogen-fixing symbiosis and buffers oxygen in functioning nodules. Necessary for the production of pods. May not function as an oxygen storage or transport protein. Has an unusually high affinity for O(2) through a hexacoordinate heme iron because of a very low dissociation constant. The polypeptide is Anaerobic nitrite reductase Glb1-2 (Lotus japonicus (Lotus corniculatus var. japonicus)).